Here is a 123-residue protein sequence, read N- to C-terminus: Small ribosomal subunit protein uS12 (123 aa).

Aspartate 89 is subject to 3-methylthioaspartic acid. Residues 104–123 are disordered; the sequence is TQGVKDRRQRRSKYGAKRPK. Residues 110 to 123 show a composition bias toward basic residues; sequence RRQRRSKYGAKRPK.

This sequence belongs to the universal ribosomal protein uS12 family. In terms of assembly, part of the 30S ribosomal subunit. Contacts proteins S8 and S17. May interact with IF1 in the 30S initiation complex.

Its function is as follows. With S4 and S5 plays an important role in translational accuracy. Functionally, interacts with and stabilizes bases of the 16S rRNA that are involved in tRNA selection in the A site and with the mRNA backbone. Located at the interface of the 30S and 50S subunits, it traverses the body of the 30S subunit contacting proteins on the other side and probably holding the rRNA structure together. The combined cluster of proteins S8, S12 and S17 appears to hold together the shoulder and platform of the 30S subunit. The chain is Small ribosomal subunit protein uS12 from Rhodospirillum rubrum (strain ATCC 11170 / ATH 1.1.1 / DSM 467 / LMG 4362 / NCIMB 8255 / S1).